The primary structure comprises 343 residues: Putative MO25-like protein At4g17270 (343 aa).

The protein belongs to the Mo25 family.

The polypeptide is Putative MO25-like protein At4g17270 (Arabidopsis thaliana (Mouse-ear cress)).